We begin with the raw amino-acid sequence, 26 residues long: Turripeptide OL49 (26 aa).

In terms of processing, contains 3 disulfide bonds. In terms of tissue distribution, expressed by the venom duct.

It is found in the secreted. Acts as a neurotoxin by inhibiting an ion channel. This is Turripeptide OL49 from Iotyrris olangoensis (Sea snail).